The sequence spans 563 residues: Arginine--tRNA ligase (563 aa).

A 'HIGH' region motif is present at residues Pro120–His130.

This sequence belongs to the class-I aminoacyl-tRNA synthetase family. As to quaternary structure, monomer.

The protein resides in the cytoplasm. The enzyme catalyses tRNA(Arg) + L-arginine + ATP = L-arginyl-tRNA(Arg) + AMP + diphosphate. The sequence is that of Arginine--tRNA ligase from Clostridium botulinum (strain Alaska E43 / Type E3).